A 317-amino-acid polypeptide reads, in one-letter code: Transaldolase (317 aa).

The Schiff-base intermediate with substrate role is filled by Lys132.

Belongs to the transaldolase family. Type 1 subfamily. In terms of assembly, homodimer.

It localises to the cytoplasm. It catalyses the reaction D-sedoheptulose 7-phosphate + D-glyceraldehyde 3-phosphate = D-erythrose 4-phosphate + beta-D-fructose 6-phosphate. The protein operates within carbohydrate degradation; pentose phosphate pathway; D-glyceraldehyde 3-phosphate and beta-D-fructose 6-phosphate from D-ribose 5-phosphate and D-xylulose 5-phosphate (non-oxidative stage): step 2/3. Transaldolase is important for the balance of metabolites in the pentose-phosphate pathway. This is Transaldolase from Haemophilus influenzae (strain PittEE).